The chain runs to 125 residues: Small ribosomal subunit protein uS12 (125 aa).

A disordered region spans residues 1–30 (MPTISQLVRKPRAAKPLKSKVPALGNSPQK). Basic residues predominate over residues 9–18 (RKPRAAKPLK). The residue at position 89 (Asp89) is a 3-methylthioaspartic acid. Residues 103–125 (DTAGVKDRKQGRSKYGAKKPKSA) are disordered. Over residues 113–125 (GRSKYGAKKPKSA) the composition is skewed to basic residues.

This sequence belongs to the universal ribosomal protein uS12 family. As to quaternary structure, part of the 30S ribosomal subunit. Contacts proteins S8 and S17. May interact with IF1 in the 30S initiation complex.

Its function is as follows. With S4 and S5 plays an important role in translational accuracy. In terms of biological role, interacts with and stabilizes bases of the 16S rRNA that are involved in tRNA selection in the A site and with the mRNA backbone. Located at the interface of the 30S and 50S subunits, it traverses the body of the 30S subunit contacting proteins on the other side and probably holding the rRNA structure together. The combined cluster of proteins S8, S12 and S17 appears to hold together the shoulder and platform of the 30S subunit. The polypeptide is Small ribosomal subunit protein uS12 (Nitrosospira multiformis (strain ATCC 25196 / NCIMB 11849 / C 71)).